Consider the following 876-residue polypeptide: Leucine--tRNA ligase (876 aa).

A 'HIGH' region motif is present at residues 43–53; the sequence is PYPSGRIHMGH. The 'KMSKS' region motif lies at 632–636; sequence KMSKS. Residue Lys-635 coordinates ATP.

The protein belongs to the class-I aminoacyl-tRNA synthetase family.

Its subcellular location is the cytoplasm. The enzyme catalyses tRNA(Leu) + L-leucine + ATP = L-leucyl-tRNA(Leu) + AMP + diphosphate. The chain is Leucine--tRNA ligase from Rhodopseudomonas palustris (strain ATCC BAA-98 / CGA009).